Here is a 205-residue protein sequence, read N- to C-terminus: Urease accessory protein UreG (205 aa).

Residue 14–21 (GPVGSGKT) participates in GTP binding.

It belongs to the SIMIBI class G3E GTPase family. UreG subfamily. Homodimer. UreD, UreF and UreG form a complex that acts as a GTP-hydrolysis-dependent molecular chaperone, activating the urease apoprotein by helping to assemble the nickel containing metallocenter of UreC. The UreE protein probably delivers the nickel.

It localises to the cytoplasm. Functionally, facilitates the functional incorporation of the urease nickel metallocenter. This process requires GTP hydrolysis, probably effectuated by UreG. This is Urease accessory protein UreG from Escherichia coli O157:H7.